The primary structure comprises 5875 residues: Probable E3 ubiquitin-protein ligase DDB_G0283893 (5875 aa).

15 disordered regions span residues 17-64, 164-185, 232-276, 302-342, 642-693, 716-740, 1081-1101, 1291-1367, 1806-1851, 1952-1982, 2008-2036, 2109-2203, 2893-2930, 3083-3119, and 3195-3214; these read DNNN…QPPE, NNNNNNDNNSNNKTDDNNQSNN, DSNN…TTTS, PSFK…CGNG, TTTT…SPPI, SIRSSSNKVNEGTPKSSTTTTTTNA, ITPTNTTTTTTTTTPSTTSIP, DGWE…KEST, QESE…SSPP, KKPSSDQQHHSGGCHHSNHHHHHHHSRKDEV, EDEDELQYLSEDEKVVNGNENTGEEDDEE, KALK…TGSG, DSDDSDDEFPTVDENVTSSGLSTSAGGSGGGVAGTNDS, TSPSSSKGKSSSASASSSSSTTTATSTLPSNTQSGSN, and LLPPPSSSSNENVVDNDNTN. The span at 18 to 52 shows a compositional bias: low complexity; that stretch reads NNNNNNNNNNNNNNNNNNNNNNNNNNNSNNNNNKN. A compositionally biased stretch (basic and acidic residues) spans 237–249; the sequence is DNKENKKEDKESS. 3 stretches are compositionally biased toward low complexity: residues 250–276, 317–333, and 642–656; these read KPIASSPIPITTTNIEKPTIATTTTTS, TSTITTQPLPSSTITQP, and TTTTTATTTTTTTTT. Polar residues predominate over residues 657–669; it reads NESIPMETTRSST. The span at 670–693 shows a compositional bias: low complexity; that stretch reads PIPIVNNNNNNNDSKSNSKKSPPI. Polar residues predominate over residues 716-725; it reads SIRSSSNKVN. Low complexity predominate over residues 728-740; it reads TPKSSTTTTTTNA. Residues 1297–1330 are compositionally biased toward acidic residues; sequence FNDDDDEEEDEEEEEEMDEDDSENDEDEDSEESE. Residues 1300 to 1328 are a coiled coil; the sequence is DDDEEEDEEEEEEMDEDDSENDEDEDSEE. 2 stretches are compositionally biased toward low complexity: residues 1347–1363 and 1838–1851; these read TTTTTAAAATTTATATT and SNSSPALTASSSPP. The span at 1963–1977 shows a compositional bias: basic residues; sequence GGCHHSNHHHHHHHS. The UBR-type zinc finger occupies 2042-2113; it reads KVCTYTFTKN…KGNPCKALKP (72 aa). 2 stretches are compositionally biased toward low complexity: residues 2118 to 2168 and 2178 to 2203; these read PPKQ…TNTN and SSSSSNSSPSFNNNNNNNNNGTTGSG. The span at 2893 to 2903 shows a compositional bias: acidic residues; the sequence is DSDDSDDEFPT. Low complexity predominate over residues 2908 to 2917; it reads VTSSGLSTSA. The span at 3201–3211 shows a compositional bias: low complexity; the sequence is SSSNENVVDND. A ZZ-type zinc finger spans residues 3226 to 3280; it reads EVLFSCDLCNINPITGKRWNCSNCGDFDLCNQCYQNPEKDHPKDHIFKEFIIDEP. Positions 3231, 3234, 3246, 3249, 3255, 3258, 3266, and 3270 each coordinate Zn(2+). Disordered regions lie at residues 3282–3312, 3326–3359, and 3754–3776; these read KDGDEKESTNEPPQQQKQQDQQLQQDLQDDS, LNNNNNNNNNNESMDTSTLTTTTTTTNKTTPTTN, and SSTSQDTQQESSNNNNNNNSNDI. Composition is skewed to low complexity over residues 3295-3307 and 3327-3358; these read QQQKQQDQQLQQD and NNNNNNNNNNESMDTSTLTTTTTTTNKTTPTT. The UIM domain occupies 3313 to 3332; sequence EYDEELKIAISMSLNNNNNN. The span at 3754-3763 shows a compositional bias: polar residues; it reads SSTSQDTQQE. Low complexity predominate over residues 3764-3774; it reads SSNNNNNNNSN. Residues 4118–4146 adopt a coiled-coil conformation; that stretch reads IENQEDHKRAIQTIEKESENAHKKYQRLI. A compositionally biased stretch (low complexity) spans 4182–4222; it reads NTSTNSTGSNNQSINSSSGNISTNSSSSSSSSFGISNQSSS. Disordered stretches follow at residues 4182–4237, 4295–4323, and 4616–4671; these read NTST…GGVI, FISGGGQPSSNDKQQQQQQQQQQSSRQCP, and KILS…FDND. Residues 4223–4236 show a composition bias toward gly residues; sequence GNGGGGVGSGGGGV. Positions 4308–4317 are enriched in low complexity; it reads QQQQQQQQQQ. Residues 4585 to 4618 adopt a coiled-coil conformation; the sequence is QIQQQIALQQQQIQQQIQQQQQQLNESVSGLKIL. Low complexity-rich tracts occupy residues 4619–4635 and 4645–4659; these read SPSSSSSSPSGVGATGS and SSGSSVSGSGSISSS. The tract at residues 5357–5870 is UBR4 E3 catalytic module; it reads PALPFVLVLL…EYLLKLYKSV (514 aa). The HemiRING-type zinc-finger motif lies at 5476–5620; that stretch reads GFTCMVCREG…WVNLNNISRV (145 aa). Zn(2+) is bound by residues cysteine 5479, cysteine 5482, histidine 5554, and cysteine 5557. The 248-residue stretch at 5623-5870 folds into the UZI domain; sequence PKFRILSHDL…EYLLKLYKSV (248 aa). The stretch at 5819 to 5846 forms a coiled coil; it reads QVDVKELLNCFENELKEFQDEMEFFDDE.

It belongs to the UBR4 family.

It functions in the pathway protein modification; protein ubiquitination. Its function is as follows. Probable E3 ubiquitin-protein ligase. In Dictyostelium discoideum (Social amoeba), this protein is Probable E3 ubiquitin-protein ligase DDB_G0283893.